Here is a 270-residue protein sequence, read N- to C-terminus: NADPH-dependent 7-cyano-7-deazaguanine reductase (270 aa).

79-81 (IES) is a substrate binding site. 81-82 (SK) provides a ligand contact to NADPH. C177 functions as the Thioimide intermediate in the catalytic mechanism. The Proton donor role is filled by D184. Position 216–217 (216–217 (HE)) interacts with substrate. 245–246 (RG) is an NADPH binding site.

It belongs to the GTP cyclohydrolase I family. QueF type 2 subfamily. As to quaternary structure, homodimer.

It localises to the cytoplasm. The enzyme catalyses 7-aminomethyl-7-carbaguanine + 2 NADP(+) = 7-cyano-7-deazaguanine + 2 NADPH + 3 H(+). The protein operates within tRNA modification; tRNA-queuosine biosynthesis. Its function is as follows. Catalyzes the NADPH-dependent reduction of 7-cyano-7-deazaguanine (preQ0) to 7-aminomethyl-7-deazaguanine (preQ1). The chain is NADPH-dependent 7-cyano-7-deazaguanine reductase from Acinetobacter baumannii (strain ATCC 17978 / DSM 105126 / CIP 53.77 / LMG 1025 / NCDC KC755 / 5377).